Reading from the N-terminus, the 302-residue chain is MADRRRVHAWARARPAAPEPAPPTPSAAAPSVAPGPAATPPDPAVEQEFTRLQTQYDARLGLYAVDTGSGESVAFRADERFAFASTFKALAAAAVLDSTTPQQLDQVVRYSKDELLENSPITKDHVATGMTLRELCDAAVRFSDNTAGNLLLKHVGGPQGLDAALTAVGDEVTSADRWEPELNSAVPGDVRDTSTPRALAHDLRQFVLGDALAEDDRALLTDWLRRNTTGGTVIRAGVPADWVVGDKTGSGYYGGRNDIAVLWPPNRAPIVMAVMTSREEPRAKRADALLADAARVAVTALG.

The span at 1–11 shows a compositional bias: basic residues; the sequence is MADRRRVHAWA. A signal peptide spans 1–29; it reads MADRRRVHAWARARPAAPEPAPPTPSAAA. The segment at 1–43 is disordered; it reads MADRRRVHAWARARPAAPEPAPPTPSAAAPSVAPGPAATPPDP. Over residues 26-36 the composition is skewed to low complexity; the sequence is SAAAPSVAPGP. Catalysis depends on serine 85, which acts as the Acyl-ester intermediate. Residue serine 143 coordinates substrate. Residue glutamate 179 is the Proton acceptor of the active site. Residue 247-249 coordinates substrate; that stretch reads KTG.

This sequence belongs to the class-A beta-lactamase family.

It localises to the secreted. It catalyses the reaction a beta-lactam + H2O = a substituted beta-amino acid. In terms of biological role, active on penicillins but not on cephalosporins. The sequence is that of Beta-lactamase (bla) from Amycolatopsis lactamdurans (Nocardia lactamdurans).